The following is a 262-amino-acid chain: Octanoyltransferase (262 aa).

The region spanning 41–232 (PQLPDGLLLL…SFCQVFGLQA (192 aa)) is the BPL/LPL catalytic domain. Residues 96–103 (RGGEVTYH), 163–165 (AIG), and 176–178 (GFA) contribute to the substrate site. Residue C194 is the Acyl-thioester intermediate of the active site.

It belongs to the LipB family.

It is found in the cytoplasm. The enzyme catalyses octanoyl-[ACP] + L-lysyl-[protein] = N(6)-octanoyl-L-lysyl-[protein] + holo-[ACP] + H(+). The protein operates within protein modification; protein lipoylation via endogenous pathway; protein N(6)-(lipoyl)lysine from octanoyl-[acyl-carrier-protein]: step 1/2. Functionally, catalyzes the transfer of endogenously produced octanoic acid from octanoyl-acyl-carrier-protein onto the lipoyl domains of lipoate-dependent enzymes. Lipoyl-ACP can also act as a substrate although octanoyl-ACP is likely to be the physiological substrate. The sequence is that of Octanoyltransferase from Synechococcus sp. (strain JA-2-3B'a(2-13)) (Cyanobacteria bacterium Yellowstone B-Prime).